A 1117-amino-acid polypeptide reads, in one-letter code: Sodium-driven chloride bicarbonate exchanger (1117 aa).

The span at M1 to H14 shows a compositional bias: polar residues. 4 disordered regions span residues M1 to G26, G57 to P94, K244 to Q312, and N456 to L475. Over M1 to C508 the chain is Cytoplasmic. Residues Q15–G26 show a composition bias toward basic and acidic residues. Over residues R58–D75 the composition is skewed to basic residues. A compositionally biased stretch (basic and acidic residues) spans R76 to P89. S88 is subject to Phosphoserine. T93 carries the phosphothreonine modification. Over residues E247–S263 the composition is skewed to polar residues. At S275 the chain carries Phosphoserine. The chain crosses the membrane as a helical span at residues L509–L529. Residues L530–R537 lie on the Extracellular side of the membrane. The helical transmembrane segment at I538–G558 threads the bilayer. The Cytoplasmic portion of the chain corresponds to G559 to P561. A helical transmembrane segment spans residues L562 to C582. Residues K583 to S595 are Extracellular-facing. A helical membrane pass occupies residues I596–V616. Residues C617–E625 are Cytoplasmic-facing. Residues A626 to L646 form a helical membrane-spanning segment. The Extracellular segment spans residues S647–P719. N673, N676, N686, and N696 each carry an N-linked (GlcNAc...) asparagine glycan. A helical transmembrane segment spans residues Y720 to A740. Topologically, residues T741–D761 are cytoplasmic. Residues F762–S782 traverse the membrane as a helical segment. The Extracellular portion of the chain corresponds to P783–N808. The chain crosses the membrane as a helical span at residues P809–M829. Residues D830 to D854 lie on the Cytoplasmic side of the membrane. The helical transmembrane segment at L855 to A875 threads the bilayer. Topologically, residues A876–T911 are extracellular. Residues G912–I932 form a helical membrane-spanning segment. Over P933–M934 the chain is Cytoplasmic. Residues P935–F955 traverse the membrane as a helical segment. Topologically, residues D956–W997 are extracellular. A helical membrane pass occupies residues I998–V1018. Residues R1019–S1117 are Cytoplasmic-facing. Phosphoserine is present on residues S1056 and S1084.

The protein belongs to the anion exchanger (TC 2.A.31) family. N-glycosylated.

It localises to the basolateral cell membrane. It is found in the apical cell membrane. The protein resides in the cell projection. Its subcellular location is the dendrite. The protein localises to the axon. It localises to the perikaryon. It is found in the presynapse. The protein resides in the postsynapse. In terms of biological role, sodium/bicarbonate cotransporter which plays an important role in regulating intracellular pH. Has been shown to act as a sodium/bicarbonate cotransporter in exchange for intracellular chloride. Has also been shown to act as a sodium/biocarbonate cotransporter which does not couple net influx of bicarbonate to net efflux of chloride, with the observed chloride efflux being due to chloride self-exchange. Controls neuronal pH and may contribute to the secretion of cerebrospinal fluid. Acting on presynaptic intracellular pH, it promotes GABA release, reduces the excitability of CA1 pyramidal neurons, and modulates short-term synaptic plasticity. Required in retinal cells to maintain normal pH which is necessary for normal vision. In the kidney, likely to mediate bicarbonate reclamation in the apical membrane of the proximal tubules. This is Sodium-driven chloride bicarbonate exchanger from Bos taurus (Bovine).